We begin with the raw amino-acid sequence, 266 residues long: Beta-lactamase OXA-10 (266 aa).

The signal sequence occupies residues 1–19 (MKTFAAYVIIACLSSTALA). A disulfide bridge links cysteine 44 with cysteine 51. The active-site Acyl-ester intermediate is serine 67. N6-carboxylysine is present on lysine 70. Residues serine 115, threonine 206, phenylalanine 208, and arginine 250 each coordinate a beta-lactam.

It belongs to the class-D beta-lactamase family. In terms of assembly, dimer.

It is found in the periplasm. It catalyses the reaction a beta-lactam + H2O = a substituted beta-amino acid. Its activity is regulated as follows. Activated, with respect to most beta-lactam substrates, in the presence of 0.05 M sodium bicarbonate. Its function is as follows. Class D beta-lactamase which confers resistance to the beta-lactam antibiotics, including penicillin, carbenicillin and oxacillin, and also some cephalosporins. Confers weak resistance to some carbapenems, in E.coli strain C600Z1. Acts via hydrolysis of the beta-lactam ring. Has penicillin- and cephalosporin-hydrolyzing activities. The sequence is that of Beta-lactamase OXA-10 from Pseudomonas aeruginosa.